The chain runs to 191 residues: Thymidine kinase (191 aa).

Residues 9 to 16 (GTMNSGKT) and 85 to 88 (DEAQ) each bind ATP. The Proton acceptor role is filled by Glu-86. Zn(2+)-binding residues include Cys-143, Cys-146, Cys-180, and His-183.

Belongs to the thymidine kinase family. Homotetramer.

It is found in the cytoplasm. It catalyses the reaction thymidine + ATP = dTMP + ADP + H(+). This Streptococcus gordonii (strain Challis / ATCC 35105 / BCRC 15272 / CH1 / DL1 / V288) protein is Thymidine kinase.